Reading from the N-terminus, the 499-residue chain is Probable cytosol aminopeptidase (499 aa).

Residues Lys268 and Asp273 each contribute to the Mn(2+) site. The active site involves Lys280. Positions 291, 350, and 352 each coordinate Mn(2+). Residue Arg354 is part of the active site.

This sequence belongs to the peptidase M17 family. Requires Mn(2+) as cofactor.

Its subcellular location is the cytoplasm. The enzyme catalyses Release of an N-terminal amino acid, Xaa-|-Yaa-, in which Xaa is preferably Leu, but may be other amino acids including Pro although not Arg or Lys, and Yaa may be Pro. Amino acid amides and methyl esters are also readily hydrolyzed, but rates on arylamides are exceedingly low.. It catalyses the reaction Release of an N-terminal amino acid, preferentially leucine, but not glutamic or aspartic acids.. Functionally, presumably involved in the processing and regular turnover of intracellular proteins. Catalyzes the removal of unsubstituted N-terminal amino acids from various peptides. This is Probable cytosol aminopeptidase from Halorhodospira halophila (strain DSM 244 / SL1) (Ectothiorhodospira halophila (strain DSM 244 / SL1)).